Reading from the N-terminus, the 160-residue chain is Phosphopantetheine adenylyltransferase (160 aa).

Position 9 (T9) interacts with substrate. ATP contacts are provided by residues 9-10 (TF) and H17. K41, L73, and R87 together coordinate substrate. ATP is bound by residues 88 to 90 (GLR), E98, and 123 to 129 (YSFLSSS).

Belongs to the bacterial CoaD family. As to quaternary structure, homohexamer. Requires Mg(2+) as cofactor.

The protein resides in the cytoplasm. The enzyme catalyses (R)-4'-phosphopantetheine + ATP + H(+) = 3'-dephospho-CoA + diphosphate. It participates in cofactor biosynthesis; coenzyme A biosynthesis; CoA from (R)-pantothenate: step 4/5. In terms of biological role, reversibly transfers an adenylyl group from ATP to 4'-phosphopantetheine, yielding dephospho-CoA (dPCoA) and pyrophosphate. The chain is Phosphopantetheine adenylyltransferase from Moorella thermoacetica (strain ATCC 39073 / JCM 9320).